Here is a 229-residue protein sequence, read N- to C-terminus: Flagellar calcium-binding protein TB-1.7G (229 aa).

The disordered stretch occupies residues 1–25 (GSKNASNPKDGAASKGGKDGKTTAD). The segment covering 16–25 (GGKDGKTTAD) has biased composition (basic and acidic residues). EF-hand domains follow at residues 44–79 (ESKS…ILKL), 80–115 (DEFT…LVEF), 126–161 (YDIF…LKEW), and 163–198 (VDIT…KKLQ). Ca(2+) contacts are provided by D57, N59, T61, K63, and E68. 8 residues coordinate Ca(2+): D139, D141, S143, E150, D176, N178, S180, and E187. The tract at residues 202 to 229 (DPDDEENGANEGDGANAGDGVPAAEGSA) is disordered. The segment covering 210–221 (ANEGDGANAGDG) has biased composition (low complexity).

Belongs to the calflagin family.

It localises to the cell projection. Its subcellular location is the cilium. It is found in the flagellum. Functionally, may contribute to the rapid motility of the trypanosomes, playing a role either in flagellar structure or in calcium metabolism. Could alternate between a GDP-bound inactive form to a calcium/GTP-bound active form. This Trypanosoma brucei brucei protein is Flagellar calcium-binding protein TB-1.7G.